The following is a 148-amino-acid chain: uncharacterized protein (148 aa).

The disordered stretch occupies residues 1 to 108 (MGRAGPRSTA…PSRLRGKRSL (108 aa)). Over residues 22–42 (RRPRPWQKPTSPRRLHRRRPR) the composition is skewed to basic residues. Positions 88–97 (DTSASNPSQR) are enriched in polar residues.

This is an uncharacterized protein from Homo sapiens (Human).